A 355-amino-acid chain; its full sequence is N6-mAMP deaminase (355 aa).

Zn(2+)-binding residues include His-13 and His-15. N(6)-methyl-AMP-binding positions include His-15, Asn-17, His-65, Thr-97–Lys-100, Asp-160, and Gly-190. His-217 contributes to the Zn(2+) binding site. Positions 220, 295, and 296 each coordinate N(6)-methyl-AMP. The Proton donor role is filled by Glu-220. Position 295 (Asp-295) interacts with Zn(2+).

The protein belongs to the metallo-dependent hydrolases superfamily. Adenosine and AMP deaminases family. In terms of assembly, monomer. Requires Zn(2+) as cofactor.

It localises to the cytoplasm. It is found in the cytosol. It carries out the reaction N(6)-methyl-AMP + H2O + H(+) = IMP + methylamine. In terms of biological role, catalyzes the hydrolysis of the free cytosolic methylated adenosine nucleotide N(6)-methyl-AMP (N6-mAMP) to produce inositol monophosphate (IMP) and methylamine. Is required for the catabolism of cytosolic N6-mAMP, which is derived from the degradation of mRNA containing N6-methylated adenine (m6A). Does not possess deaminase activity toward adenosine, AMP, N6-methyladenosine, or N6-mATP in vitro. The protein is N6-mAMP deaminase of Arabidopsis thaliana (Mouse-ear cress).